Here is a 134-residue protein sequence, read N- to C-terminus: Small ribosomal subunit protein uS9c (134 aa).

A disordered region spans residues 105–134; it reads QGYLTRNPLRKERKKYGLKKARKAPQFSKR. The segment covering 115–134 has biased composition (basic residues); it reads KERKKYGLKKARKAPQFSKR.

Belongs to the universal ribosomal protein uS9 family.

It localises to the plastid. It is found in the chloroplast. The chain is Small ribosomal subunit protein uS9c (rps9) from Nephroselmis olivacea (Green alga).